The following is a 377-amino-acid chain: MSDVLDLACDLISRPSMTPDDAGCQEMIAKRLERAGFICEHLRYAAVSNLWATHGRGAPVLVLLGHTDVVPPGPVEAWTSDPFMPDMRNGILYGRGAADMKGSVAAFVIAAERFLAAYPQHPGTLAILLTSDEEGQAIDGVRKVAETLRQRGQGIDWCLTGEPSSSKRLGDLLRVGRRGSLSATLHVKGVQGHVAYPHQARNPIHLALPAFAALTARHWDDGYESFPSTSLQISNIHAGTGANNVIPGALEVAFNLRYNPHWIAPRLESEIVALLDQHGLDYTLHWHRSGEPFYTPEGKLRRIAREVLERFSGAPPEESTGGGTSDARFIAPLGAQCIEVGPVNASIHQVDEHVCLSDLEALPDLYQLLIERLLAEH.

Histidine 66 is a Zn(2+) binding site. Aspartate 68 is an active-site residue. Residue aspartate 99 participates in Zn(2+) binding. The active-site Proton acceptor is glutamate 133. Residues glutamate 134, glutamate 162, and histidine 348 each contribute to the Zn(2+) site.

Belongs to the peptidase M20A family. DapE subfamily. In terms of assembly, homodimer. Requires Zn(2+) as cofactor. The cofactor is Co(2+).

It carries out the reaction N-succinyl-(2S,6S)-2,6-diaminopimelate + H2O = (2S,6S)-2,6-diaminopimelate + succinate. Its pathway is amino-acid biosynthesis; L-lysine biosynthesis via DAP pathway; LL-2,6-diaminopimelate from (S)-tetrahydrodipicolinate (succinylase route): step 3/3. Its function is as follows. Catalyzes the hydrolysis of N-succinyl-L,L-diaminopimelic acid (SDAP), forming succinate and LL-2,6-diaminopimelate (DAP), an intermediate involved in the bacterial biosynthesis of lysine and meso-diaminopimelic acid, an essential component of bacterial cell walls. The sequence is that of Succinyl-diaminopimelate desuccinylase from Xylella fastidiosa (strain M23).